Reading from the N-terminus, the 354-residue chain is Guanine nucleotide-binding protein G(i) subunit alpha-1 (354 aa).

Residue Gly-2 is the site of N-myristoyl glycine attachment. Cys-3 carries S-palmitoyl cysteine lipidation. One can recognise a G-alpha domain in the interval 32 to 354 (REVKLLLLGA…KNNLKDCGLF (323 aa)). Residues 35 to 48 (KLLLLGAGESGKST) form a G1 motif region. Residues 43–48 (ESGKST), 150–151 (DS), and 175–178 (LRTR) each bind GTP. Mg(2+) is bound at residue Ser-47. The G2 motif stretch occupies residues 173–181 (DVLRTRVKT). Thr-181 provides a ligand contact to Mg(2+). The interval 196 to 205 (FKMFDVGGQR) is G3 motif. Residues 200–204 (DVGGQ), 269–272 (NKKD), and Ala-326 each bind GTP. The tract at residues 265–272 (ILFLNKKD) is G4 motif. The G5 motif stretch occupies residues 324–329 (TCATDT).

Belongs to the G-alpha family. G(i/o/t/z) subfamily. As to quaternary structure, heterotrimeric G proteins are composed of 3 units; alpha, beta and gamma. The alpha chain contains the guanine nucleotide binding site. Part of a spindle orientation complex at least composed of GNAI1, GPSM2 and NUMA1. Identified in complex with the beta subunit GNB1 and the gamma subunit GNG1. Identified in complex with the beta subunit GNB1 and the gamma subunit GNG2. Component of the TAS2R14-GNAI1 complex, consisting of TAS2R14, GNAI1, GNB1 and GNG2; within the complex interacts with TAS2R14; this complex plays a role in the perception of bitterness. GTP binding causes dissociation of the heterotrimer, liberating the individual subunits so that they can interact with downstream effector proteins. Interacts (GDP-bound form) with GPSM1; this inhibits guanine nucleotide exchange and GTP binding. Interacts (GDP-bound form) with GPSM2 (via GoLoco domains); this inhibits guanine nucleotide exchange. Interacts with RGS10; this strongly enhances GTP hydrolysis. Interacts with RGS1 and RGS16; this strongly enhances GTPase activity. Interacts with RGS4. Interacts with RGS12. Interacts (via active GTP- or inactive GDP-bound forms) with RGS14 (via RGS and GoLoco domains). Interacts with RGS3, RGS6, RGS7, RGS8, RGS17, RGS18 and RGS20 (in vitro). Interacts (GDP-bound form) with RIC8A (via C-terminus); promoting GNAI1 folding and association with the plasma membrane. Interacts (inactive GDP-bound form) with NUCB1 (via GBA motif); the interaction leads to activation of GNAI1. Interacts (inactive GDP-bound form) with CCDC88C/DAPLE (via GBA motif); the interaction leads to activation of GNAI1. Interacts (inactive GDP-bound form) with CCDC8A/GIV (via GBA motif). Post-translationally, myristoylation at Gly-2 is required for membrane anchoring before palmitoylation. Palmitoylation at Cys-3 varies with membrane lipid composition.

It localises to the nucleus. The protein localises to the cytoplasm. It is found in the cell membrane. Its subcellular location is the cytoskeleton. The protein resides in the microtubule organizing center. It localises to the centrosome. The protein localises to the cell cortex. It is found in the membrane. The catalysed reaction is GTP + H2O = GDP + phosphate + H(+). Its function is as follows. Guanine nucleotide-binding proteins (G proteins) function as transducers downstream of G protein-coupled receptors (GPCRs) in numerous signaling cascades. The alpha chain contains the guanine nucleotide binding site and alternates between an active, GTP-bound state and an inactive, GDP-bound state. Signaling by an activated GPCR promotes GDP release and GTP binding. The alpha subunit has a low GTPase activity that converts bound GTP to GDP, thereby terminating the signal. Both GDP release and GTP hydrolysis are modulated by numerous regulatory proteins. Signaling is mediated via effector proteins, such as adenylate cyclase. Inhibits adenylate cyclase activity of ADCY1, ADCY5 and ADCY6, leading to decreased intracellular cAMP levels. The inactive GDP-bound form prevents the association of RGS14 with centrosomes and is required for the translocation of RGS14 from the cytoplasm to the plasma membrane. Required for normal cytokinesis during mitosis. Required for cortical dynein-dynactin complex recruitment during metaphase. In Bos taurus (Bovine), this protein is Guanine nucleotide-binding protein G(i) subunit alpha-1 (GNAI1).